Here is a 519-residue protein sequence, read N- to C-terminus: MSDQVIIFDTTLRDGEQALSASLTVKEKLQIAFALERLGVDVMEVGFPISSPGDFESVKTIAREIKNSRVCGLSRALPKDIDAAWNALKGADAFRIHTFISTSTIHVENKLKRTFDAVLEMGINAVKHARNYTDDVEFSCEDAGRTPIDNLCRIVEEAIKAGATTINIPDTVGYTYPSEFGGIIKTLFNRVPNIDQAIISVHCHDDLGMSVANSITAVENGARQIECTMNGLGERAGNCSLEEVAMILQTRKDKLGFTTNVNPMEISRTSQLVSQLCNMPIQANKAIVGANAFSHSSGIHQDGVLKSQNTYEIMTPESVGISTNKLNLTSRSGRHVIQHRMQELGYRDTDYDLEQLYASFVELADKKGQVFDYDLEALMFFNKVDSDPQHYRLESINVQSGSGLVATATIVMSIGEDKKVVEAATGNGPIDAAYQCLMRISGLDINMDDYHINAKGAGKDALGQVDIVATYNGQKFHGLGLSTDIIESSTKAMVHVMNHIHLAKAVAIEKEQLIHIDQV.

Positions 5-267 constitute a Pyruvate carboxyltransferase domain; that stretch reads VIIFDTTLRD…TTNVNPMEIS (263 aa). Positions 14, 202, 204, and 238 each coordinate Mn(2+). A regulatory domain region spans residues 392–519; sequence RLESINVQSG…KEQLIHIDQV (128 aa).

The protein belongs to the alpha-IPM synthase/homocitrate synthase family. LeuA type 1 subfamily. As to quaternary structure, homodimer. Mn(2+) serves as cofactor.

It is found in the cytoplasm. The catalysed reaction is 3-methyl-2-oxobutanoate + acetyl-CoA + H2O = (2S)-2-isopropylmalate + CoA + H(+). It functions in the pathway amino-acid biosynthesis; L-leucine biosynthesis; L-leucine from 3-methyl-2-oxobutanoate: step 1/4. Its function is as follows. Catalyzes the condensation of the acetyl group of acetyl-CoA with 3-methyl-2-oxobutanoate (2-ketoisovalerate) to form 3-carboxy-3-hydroxy-4-methylpentanoate (2-isopropylmalate). The sequence is that of 2-isopropylmalate synthase from Psychromonas ingrahamii (strain DSM 17664 / CCUG 51855 / 37).